We begin with the raw amino-acid sequence, 278 residues long: Juvenile hormone acid O-methyltransferase (278 aa).

Belongs to the methyltransferase superfamily. As to expression, specifically expressed in the corpora allata (CA).

It catalyses the reaction (2E,6E)-farnesoate + S-adenosyl-L-methionine = methyl (2E,6E)-farnesoate + S-adenosyl-L-homocysteine. The enzyme catalyses juvenile hormone III carboxylate + S-adenosyl-L-methionine = juvenile hormone III + S-adenosyl-L-homocysteine. Functionally, O-methyltransferase that transfers a methyl group from S-adenosyl-L-methionine (SAM) to the carboxyl group of juvenile hormone acids to produce active juvenile hormones in the corpora allata, the last step during juvenile hormone biosynthesis. Also able to methylate farnesoate to methyl farnesoate. The chain is Juvenile hormone acid O-methyltransferase from Bombyx mori (Silk moth).